The primary structure comprises 1477 residues: Inositol hexakisphosphate and diphosphoinositol-pentakisphosphate kinase 1 (1477 aa).

Residues 27 to 47 (TRGLGMRPEESDSELLEDEED) form a disordered region. Over residues 37–47 (SDSELLEDEED) the composition is skewed to acidic residues. 64–65 (KK) contributes to the substrate binding site. Residues arginine 145, lysine 198, histidine 205, arginine 224, 248–251 (EEFM), and 257–259 (DVK) each bind ATP. 224-225 (RK) lines the substrate pocket. Residues lysine 259 and arginine 273 each coordinate substrate. ATP contacts are provided by residues serine 275, aspartate 320, and 332 to 334 (DVN). 337 to 340 (SFVK) contacts substrate. Positions 382-453 (PTTSGTMMEL…VLDITRLLLA (72 aa)) are polyphosphoinositide-binding domain. The segment at 910–1016 (KGVEEEGSAP…PTEMKQSGLG (107 aa)) is disordered. Phosphoserine occurs at positions 940 and 983. Residues 1001–1016 (FSSSRPPTEMKQSGLG) show a composition bias toward polar residues. Phosphoserine is present on residues serine 1033, serine 1069, serine 1141, and serine 1148. Disordered regions lie at residues 1131–1248 (HSNQ…KPCQ) and 1438–1477 (REEV…SFSH). Positions 1164 to 1182 (SSGPSSTVSSAGPSSPTAV) are enriched in low complexity. Polar residues predominate over residues 1446–1460 (CPPSNANPQSQSLAP).

It belongs to the histidine acid phosphatase family. VIP1 subfamily.

It is found in the cytoplasm. It localises to the cytosol. The protein localises to the cell membrane. The enzyme catalyses 1D-myo-inositol hexakisphosphate + ATP = 1-diphospho-1D-myo-inositol 2,3,4,5,6-pentakisphosphate + ADP. It carries out the reaction 5-diphospho-1D-myo-inositol 1,2,3,4,6-pentakisphosphate + ATP + H(+) = 1,5-bis(diphospho)-1D-myo-inositol 2,3,4,6-tetrakisphosphate + ADP. In terms of biological role, bifunctional inositol kinase that acts in concert with the IP6K kinases IP6K1, IP6K2 and IP6K3 to synthesize the diphosphate group-containing inositol pyrophosphates diphosphoinositol pentakisphosphate, PP-InsP5, and bis-diphosphoinositol tetrakisphosphate, (PP)2-InsP4. PP-InsP5 and (PP)2-InsP4, also respectively called InsP7 and InsP8, regulate a variety of cellular processes, including apoptosis, vesicle trafficking, cytoskeletal dynamics, exocytosis, insulin signaling and neutrophil activation. Phosphorylates inositol hexakisphosphate (InsP6) at position 1 to produce PP-InsP5 which is in turn phosphorylated by IP6Ks to produce (PP)2-InsP4. Alternatively, phosphorylates PP-InsP5 at position 1, produced by IP6Ks from InsP6, to produce (PP)2-InsP4. Activated when cells are exposed to hyperosmotic stress. This chain is Inositol hexakisphosphate and diphosphoinositol-pentakisphosphate kinase 1, found in Bos taurus (Bovine).